The following is a 523-amino-acid chain: Peptide chain release factor 3 (523 aa).

The tr-type G domain occupies 10-277 (KKRRTFAIIS…SFVDLAPAPE (268 aa)). Residues 19-26 (SHPDAGKT), 87-91 (DTPGH), and 141-144 (NKLD) contribute to the GTP site.

Belongs to the TRAFAC class translation factor GTPase superfamily. Classic translation factor GTPase family. PrfC subfamily.

The protein localises to the cytoplasm. Its function is as follows. Increases the formation of ribosomal termination complexes and stimulates activities of RF-1 and RF-2. It binds guanine nucleotides and has strong preference for UGA stop codons. It may interact directly with the ribosome. The stimulation of RF-1 and RF-2 is significantly reduced by GTP and GDP, but not by GMP. This is Peptide chain release factor 3 from Lactobacillus helveticus (strain DPC 4571).